The primary structure comprises 301 residues: GTPase Era (301 aa).

The 169-residue stretch at 7-175 (YCGFIAIVGR…AAIVRKHLPE (169 aa)) folds into the Era-type G domain. The segment at 15 to 22 (GRPNVGKS) is G1. Position 15 to 22 (15 to 22 (GRPNVGKS)) interacts with GTP. Residues 41–45 (QTTRH) are G2. The interval 62–65 (DTPG) is G3. GTP is bound by residues 62-66 (DTPGL) and 124-127 (NKVD). Positions 124–127 (NKVD) are G4. Residues 154–156 (ISA) are G5. In terms of domain architecture, KH type-2 spans 206 to 283 (LGAELPYSVT…HLELWVKVKS (78 aa)).

The protein belongs to the TRAFAC class TrmE-Era-EngA-EngB-Septin-like GTPase superfamily. Era GTPase family. Monomer.

It localises to the cytoplasm. The protein resides in the cell inner membrane. Its function is as follows. An essential GTPase that binds both GDP and GTP, with rapid nucleotide exchange. Plays a role in 16S rRNA processing and 30S ribosomal subunit biogenesis and possibly also in cell cycle regulation and energy metabolism. In Escherichia coli (strain K12 / DH10B), this protein is GTPase Era.